The chain runs to 108 residues: UPF0060 membrane protein YnfA (108 aa).

The Periplasmic portion of the chain corresponds to 1–5 (MIKTT). Residues 6–26 (LLFFATALCEIIGCFLPWLWL) form a helical membrane-spanning segment. The Cytoplasmic portion of the chain corresponds to 27–30 (KRNA). The chain crosses the membrane as a helical span at residues 31–51 (SIWLLLPAGISLALFVWLLTL). Over 52-60 (HPAASGRVY) the chain is Periplasmic. The helical transmembrane segment at 61–81 (AAYGGVYVCTALMWLRVVDGV) threads the bilayer. The Cytoplasmic portion of the chain corresponds to 82-84 (KLS). Residues 85–105 (LYDWTGALIALCGMLIIVAGW) form a helical membrane-spanning segment. At 106–108 (GRT) the chain is on the periplasmic side.

This sequence belongs to the UPF0060 family.

Its subcellular location is the cell inner membrane. This is UPF0060 membrane protein YnfA from Shigella flexneri serotype 5b (strain 8401).